Consider the following 114-residue polypeptide: Histone H3-7 (114 aa).

Residues 1 to 17 (NTGGKAPRKHIAHKQAK) show a composition bias toward basic residues. The segment at 1-32 (NTGGKAPRKHIAHKQAKKSSAAAATGGVKKPH) is disordered. The segment covering 18–28 (KSSAAAATGGV) has biased composition (low complexity).

This sequence belongs to the histone H3 family. As to quaternary structure, the nucleosome is a histone octamer containing two molecules each of H2A, H2B, H3 and H4 assembled in one H3-H4 heterotetramer and two H2A-H2B heterodimers. The octamer wraps approximately 147 bp of DNA.

It is found in the nucleus. It localises to the chromosome. In terms of biological role, core component of nucleosome. Nucleosomes wrap and compact DNA into chromatin, limiting DNA accessibility to the cellular machineries which require DNA as a template. Histones thereby play a central role in transcription regulation, DNA repair, DNA replication and chromosomal stability. DNA accessibility is regulated via a complex set of post-translational modifications of histones, also called histone code, and nucleosome remodeling. This is Histone H3-7 (H3-7) from Stylonychia lemnae (Ciliate).